The chain runs to 755 residues: Lysosome membrane protein 2-B (755 aa).

Over 1 to 6 the chain is Cytoplasmic; it reads MKHIGR. A helical membrane pass occupies residues 7-27; sequence IVSFPIGLVLIAVGIIIFVVV. 8 N-linked (GlcNAc...) asparagine glycosylation sites follow: N28, N76, N379, N465, N497, N588, N607, and N680. The Lumenal segment spans residues 28–727; the sequence is NRTIKDEFKK…AYKVDSFRYA (700 aa). A helical transmembrane segment spans residues 728 to 748; that stretch reads ITVILIVVGGFLSLISGGLFV. Residues 749-755 lie on the Cytoplasmic side of the membrane; that stretch reads LDKIIDL. The Di-leucine motif motif lies at 752–753; sequence II.

The protein belongs to the CD36 family. Post-translationally, heavily glycosylated.

It is found in the lysosome membrane. May act as a lysosomal receptor. May be involved in macropinocytosis and fluid phase exocytosis. This chain is Lysosome membrane protein 2-B (lmpB), found in Dictyostelium discoideum (Social amoeba).